A 304-amino-acid polypeptide reads, in one-letter code: Putative metal ion transporter ZIPCO (304 aa).

The next 8 membrane-spanning stretches (helical) occupy residues 1–21, 46–66, 74–94, 158–178, 183–203, 218–238, 243–263, and 275–295; these read MWLK…VIYL, VASG…VIGL, IYCC…TDIL, FFIV…IGSL, PIII…LMIY, IYAW…VLSF, FVEI…SFNM, and FYIS…MIVF.

It is found in the cell membrane. In terms of biological role, putative transporter for the divalent zinc and iron cations. Required for the development of liver-stage parasites. The chain is Putative metal ion transporter ZIPCO from Plasmodium berghei (strain Anka).